Reading from the N-terminus, the 101-residue chain is Large ribosomal subunit protein uL23 (101 aa).

It belongs to the universal ribosomal protein uL23 family. Part of the 50S ribosomal subunit. Contacts protein L29, and trigger factor when it is bound to the ribosome.

Its function is as follows. One of the early assembly proteins it binds 23S rRNA. One of the proteins that surrounds the polypeptide exit tunnel on the outside of the ribosome. Forms the main docking site for trigger factor binding to the ribosome. This is Large ribosomal subunit protein uL23 from Trichodesmium erythraeum (strain IMS101).